The primary structure comprises 255 residues: Microfibril-associated glycoprotein 4 (255 aa).

The first 20 residues, 1–20 (MEALLVLPLLLLLSAGPCAP), serve as a signal peptide directing secretion. Positions 26–28 (RGD) match the Cell attachment site motif. The region spanning 32–255 (KSCLQLPLDC…KRTEMKIRRA (224 aa)) is the Fibrinogen C-terminal domain. N-linked (GlcNAc...) asparagine glycans are attached at residues asparagine 87 and asparagine 137.

As to quaternary structure, homodimer. Can also form higher oligomers. Interacts with FBN1, FBN2 and LOX. Interacts with COL1A1 in a Ca (2+)-dependent manner. Interacts with ELN in a Ca (2+)-dependent manner; this interaction promotes ELN self-assembly.

The protein localises to the secreted. The protein resides in the extracellular space. Its subcellular location is the extracellular matrix. In terms of biological role, could be involved in calcium-dependent cell adhesion or intercellular interactions. May contribute to the elastic fiber assembly and/or maintenance. This Bos taurus (Bovine) protein is Microfibril-associated glycoprotein 4 (MFAP4).